The chain runs to 417 residues: Phosphoglycerate kinase (417 aa).

Positions 23, 24, 25, 26, 38, 39, 62, 63, 65, 66, 121, 122, 169, and 170 each coordinate (2R)-3-phosphoglycerate. G213 serves as a coordination point for ADP. G213 provides a ligand contact to CDP. Residues A214 and K215 each contribute to the AMP site. A214 serves as a coordination point for ATP. A214 lines the Mg(2+) pocket. A CDP-binding site is contributed by D218. Residue D218 participates in Mg(2+) binding. Position 219 (K219) interacts with AMP. K219 is an ATP binding site. G237 contributes to the ADP binding site. A CDP-binding site is contributed by G237. AMP-binding residues include G238 and G312. Residues G238 and G312 each contribute to the ATP site. Positions 337 and 342 each coordinate CDP. Residue F342 participates in ADP binding. E343 is a binding site for AMP. Positions 343, 374, and 375 each coordinate ATP. Residue D374 participates in Mg(2+) binding.

Belongs to the phosphoglycerate kinase family. In terms of assembly, monomer. The cofactor is Mg(2+).

It localises to the cytoplasm. The protein resides in the mitochondrion. The enzyme catalyses (2R)-3-phosphoglycerate + ATP = (2R)-3-phospho-glyceroyl phosphate + ADP. It functions in the pathway carbohydrate degradation; glycolysis; pyruvate from D-glyceraldehyde 3-phosphate: step 2/5. Catalyzes one of the two ATP producing reactions in the glycolytic pathway via the reversible conversion of 1,3-diphosphoglycerate to 3-phosphoglycerate. Both L- and D- forms of purine and pyrimidine nucleotides can be used as substrates, but the activity is much lower on pyrimidines. Negatively regulates the biosynthesis of acetyl-CoA from pyruvate in the mitochondrion. In Candida maltosa (Yeast), this protein is Phosphoglycerate kinase (PGK1).